Reading from the N-terminus, the 192-residue chain is 7-methyl-GTP pyrophosphatase (192 aa).

D69 acts as the Proton acceptor in catalysis.

Belongs to the Maf family. YceF subfamily. The cofactor is a divalent metal cation.

The protein resides in the cytoplasm. It catalyses the reaction N(7)-methyl-GTP + H2O = N(7)-methyl-GMP + diphosphate + H(+). Its function is as follows. Nucleoside triphosphate pyrophosphatase that hydrolyzes 7-methyl-GTP (m(7)GTP). May have a dual role in cell division arrest and in preventing the incorporation of modified nucleotides into cellular nucleic acids. The sequence is that of 7-methyl-GTP pyrophosphatase from Pseudomonas fluorescens (strain ATCC BAA-477 / NRRL B-23932 / Pf-5).